A 111-amino-acid polypeptide reads, in one-letter code: Resistin-like beta (111 aa).

The signal sequence occupies residues 1–23 (MGPSSCLLLILIPLLQLINPGST). 5 disulfide bridges follow: Cys55–Cys108, Cys67–Cys107, Cys76–Cys93, Cys78–Cys95, and Cys82–Cys97.

The protein belongs to the resistin/FIZZ family. In terms of assembly, homodimer; disulfide-linked. As to expression, expressed only in the gastrointestinal tract, particularly the colon.

It is found in the secreted. In terms of biological role, probable hormone. This Homo sapiens (Human) protein is Resistin-like beta (RETNLB).